We begin with the raw amino-acid sequence, 67 residues long: Beta-defensin 103A (67 aa).

Residues 1–22 (MRIHYLLFTLLFLFLVPVPGHG) form the signal peptide. Cystine bridges form between cysteine 33/cysteine 62, cysteine 40/cysteine 55, and cysteine 45/cysteine 63.

It belongs to the beta-defensin family.

It localises to the secreted. In terms of biological role, exhibits antimicrobial activity against Gram-positive and Gram-negative bacteria. This chain is Beta-defensin 103A (DEFB103A), found in Gorilla gorilla gorilla (Western lowland gorilla).